A 241-amino-acid chain; its full sequence is 3-oxoacyl-[acyl-carrier-protein] reductase FabG (241 aa).

Residues glycine 13–glycine 16, serine 38, glutamate 57–isoleucine 58, and asparagine 83 each bind NADP(+). Position 135 (serine 135) interacts with substrate. The active-site Proton acceptor is tyrosine 148. Residues tyrosine 148 to lysine 152 and isoleucine 181 contribute to the NADP(+) site.

This sequence belongs to the short-chain dehydrogenases/reductases (SDR) family. As to quaternary structure, homotetramer.

The catalysed reaction is a (3R)-hydroxyacyl-[ACP] + NADP(+) = a 3-oxoacyl-[ACP] + NADPH + H(+). Its pathway is lipid metabolism; fatty acid biosynthesis. Functionally, catalyzes the NADPH-dependent reduction of beta-ketoacyl-ACP substrates to beta-hydroxyacyl-ACP products, the first reductive step in the elongation cycle of fatty acid biosynthesis. The chain is 3-oxoacyl-[acyl-carrier-protein] reductase FabG (fabG) from Rickettsia felis (strain ATCC VR-1525 / URRWXCal2) (Rickettsia azadi).